Reading from the N-terminus, the 1044-residue chain is Phosphatidylinositol 4,5-bisphosphate 3-kinase catalytic subunit delta isoform (1044 aa).

Residues Glu-16–Glu-105 form the PI3K-ABD domain. The region spanning Asn-187–His-278 is the PI3K-RBD domain. The segment at Asp-287 to Ser-312 is disordered. The C2 PI3K-type domain occupies Leu-319–Pro-476. The PIK helical domain maps to His-497–Gly-674. Residue Tyr-524 is modified to Phosphotyrosine. A PI3K/PI4K catalytic domain is found at Cys-745–Trp-1027. The interval Phe-751 to Lys-757 is G-loop. The tract at residues Gly-890–Asn-898 is catalytic loop. The segment at His-909–Thr-935 is activation loop. Residue Ser-1039 is modified to Phosphoserine; by autocatalysis.

The protein belongs to the PI3/PI4-kinase family. In terms of assembly, heterodimer of a catalytic subunit PIK3CD and a p85 regulatory subunit (PIK3R1, PIK3R2 or PIK3R3). Interacts with ERAS. Interacts with HRAS. Autophosphorylation on Ser-1039 results in the almost complete inactivation of the lipid kinase activity. As to expression, in humans, the highest levels of expression are seen in peripheral blood mononuclear cells, spleen, and thymus, and low levels of expression in testes, uterus, colon, and small intestine but not in other tissues examined including prostate, heart, brain, and liver. Isoform 2 is expressed in normal thymus, lung and spleen tissues, and is detected at low levels in normal lysates from colon and ovarian biopsies, at elevated levels in lysates from colorectal tumors and is abundantly expressed in some ovarian tumors (at protein level). Both isoform 1 and isoform 2 are widely expressed. Isoform 1 is expressed predominantly in leukocytes.

The protein localises to the cytoplasm. It carries out the reaction a 1,2-diacyl-sn-glycero-3-phospho-(1D-myo-inositol-4,5-bisphosphate) + ATP = a 1,2-diacyl-sn-glycero-3-phospho-(1D-myo-inositol-3,4,5-trisphosphate) + ADP + H(+). It catalyses the reaction a 1,2-diacyl-sn-glycero-3-phospho-(1D-myo-inositol) + ATP = a 1,2-diacyl-sn-glycero-3-phospho-(1D-myo-inositol-3-phosphate) + ADP + H(+). The enzyme catalyses 1-octadecanoyl-2-(5Z,8Z,11Z,14Z)-eicosatetraenoyl-sn-glycero-3-phospho-1D-myo-inositol 4,5-bisphosphate + ATP = 1-octadecanoyl-2-(5Z,8Z,11Z,14Z-eicosatetraenoyl)-sn-glycero-3-phospho-(1D-myo-inositol 3,4,5-triphosphate) + ADP + H(+). Its pathway is phospholipid metabolism; phosphatidylinositol phosphate biosynthesis. With respect to regulation, activated by growth factors and cytokine receptors through a tyrosine-kinase-dependent mechanism. Activated by RAS. IC87114 inhibits lipid kinase activity and is selective in cells at doses up to 5-10 uM. IC87114 blocks T-cell receptor signaling in naive and memory T-cells and reduces cytokine production by memory T-cells. Phosphoinositide-3-kinase (PI3K) phosphorylates phosphatidylinositol (PI) and its phosphorylated derivatives at position 3 of the inositol ring to produce 3-phosphoinositides. Uses ATP and PtdIns(4,5)P2 (phosphatidylinositol 4,5-bisphosphate) to generate phosphatidylinositol 3,4,5-trisphosphate (PIP3). PIP3 plays a key role by recruiting PH domain-containing proteins to the membrane, including AKT1 and PDPK1, activating signaling cascades involved in cell growth, survival, proliferation, motility and morphology. Mediates immune responses. Plays a role in B-cell development, proliferation, migration, and function. Required for B-cell receptor (BCR) signaling. Mediates B-cell proliferation response to anti-IgM, anti-CD40 and IL4 stimulation. Promotes cytokine production in response to TLR4 and TLR9. Required for antibody class switch mediated by TLR9. Involved in the antigen presentation function of B-cells. Involved in B-cell chemotaxis in response to CXCL13 and sphingosine 1-phosphate (S1P). Required for proliferation, signaling and cytokine production of naive, effector and memory T-cells. Required for T-cell receptor (TCR) signaling. Mediates TCR signaling events at the immune synapse. Activation by TCR leads to antigen-dependent memory T-cell migration and retention to antigenic tissues. Together with PIK3CG participates in T-cell development. Contributes to T-helper cell expansion and differentiation. Required for T-cell migration mediated by homing receptors SELL/CD62L, CCR7 and S1PR1 and antigen dependent recruitment of T-cells. Together with PIK3CG is involved in natural killer (NK) cell development and migration towards the sites of inflammation. Participates in NK cell receptor activation. Plays a role in NK cell maturation and cytokine production. Together with PIK3CG is involved in neutrophil chemotaxis and extravasation. Together with PIK3CG participates in neutrophil respiratory burst. Plays important roles in mast-cell development and mast cell mediated allergic response. Involved in stem cell factor (SCF)-mediated proliferation, adhesion and migration. Required for allergen-IgE-induced degranulation and cytokine release. The lipid kinase activity is required for its biological function. Isoform 2 may be involved in stabilizing total RAS levels, resulting in increased ERK phosphorylation and increased PI3K activity. The chain is Phosphatidylinositol 4,5-bisphosphate 3-kinase catalytic subunit delta isoform (PIK3CD) from Homo sapiens (Human).